The sequence spans 313 residues: UPF0761 membrane protein VV0203 (313 aa).

A run of 6 helical transmembrane segments spans residues Tyr41–Leu61, Met104–Asp124, Ala139–Ala159, Leu185–Val205, Ala215–Ala235, and Ala249–Ile269. The tract at residues Leu293–Ser313 is disordered. The segment covering Glu299 to Ser313 has biased composition (basic and acidic residues).

The protein belongs to the UPF0761 family.

It localises to the cell inner membrane. The protein is UPF0761 membrane protein VV0203 of Vibrio vulnificus (strain YJ016).